The primary structure comprises 2311 residues: Protein Ycf2 (2311 aa).

1652-1659 (GSIGTGRS) provides a ligand contact to ATP.

The protein belongs to the Ycf2 family.

The protein localises to the plastid. Its subcellular location is the chloroplast stroma. Functionally, probable ATPase of unknown function. Its presence in a non-photosynthetic plant (Epifagus virginiana) and experiments in tobacco indicate that it has an essential function which is probably not related to photosynthesis. The protein is Protein Ycf2 of Lemna minor (Common duckweed).